We begin with the raw amino-acid sequence, 377 residues long: Glutamate 5-kinase (377 aa).

Lysine 21 serves as a coordination point for ATP. 3 residues coordinate substrate: serine 61, aspartate 149, and asparagine 161. Residues 181–182 and 223–229 contribute to the ATP site; these read SD and SGGMTSK. One can recognise a PUA domain in the interval 286–363; it reads RGSVQVDAGA…REHEELLGYA (78 aa).

Belongs to the glutamate 5-kinase family.

Its subcellular location is the cytoplasm. The enzyme catalyses L-glutamate + ATP = L-glutamyl 5-phosphate + ADP. It participates in amino-acid biosynthesis; L-proline biosynthesis; L-glutamate 5-semialdehyde from L-glutamate: step 1/2. Catalyzes the transfer of a phosphate group to glutamate to form L-glutamate 5-phosphate. The sequence is that of Glutamate 5-kinase from Novosphingobium aromaticivorans (strain ATCC 700278 / DSM 12444 / CCUG 56034 / CIP 105152 / NBRC 16084 / F199).